A 900-amino-acid chain; its full sequence is Chromodomain-helicase-DNA-binding protein 1-like (900 aa).

The region spanning 52 to 217 is the Helicase ATP-binding domain; it reads VQCFHCQNGC…YSLLCVVEPD (166 aa). 65-72 serves as a coordination point for ATP; that stretch reads DEMGLGKT. Residues 168–171 carry the DEAH box motif; the sequence is DEAH. In terms of domain architecture, Helicase C-terminal spans 345-507; it reads LLDRLLAFLY…QKPSAEADFQ (163 aa). The residue at position 534 (S534) is a Phosphoserine. The tract at residues 546–569 is disordered; sequence PDALPAAAAAGGGSLEPEEGSELE. The interval 606–640 is regulatory linker segment (RLS); it reads TLLEKTSHGGRTLRNKGSVLIPGLAEGPIKRKKIL. S612, S623, and S641 each carry phosphoserine. The tract at residues 620 to 678 is required for ATPase activity; that stretch reads NKGSVLIPGLAEGPIKRKKILSPEELEDRRKKRQEAAAKRKRLMEEKRKEKEEAEHRKK. The tract at residues 641 to 673 is disordered; that stretch reads SPEELEDRRKKRQEAAAKRKRLMEEKRKEKEEA. A coiled-coil region spans residues 643–680; that stretch reads EELEDRRKKRQEAAAKRKRLMEEKRKEKEEAEHRKKMA. Over residues 653–673 the composition is skewed to basic and acidic residues; sequence QEAAAKRKRLMEEKRKEKEEA. Residues 709–900 enclose the Macro domain; that stretch reads SAELAYEDLD…ASSSSAPLVP (192 aa). The residue at position 894 (S894) is a Phosphoserine.

This sequence belongs to the SNF2/RAD54 helicase family. As to quaternary structure, interacts with nucleosomes; interacts with the acidic patch of histones. Interacts (via macro domain) with PARP1; interacts only when PARP1 is poly-ADP-ribosylated (PARylated). Interacts with CIAO1.

It localises to the nucleus. The protein resides in the chromosome. The catalysed reaction is ATP + H2O = ADP + phosphate + H(+). Its activity is regulated as follows. Adopts an inactive conformation in absence of DNA damage. Binding to poly-ADP-ribosylated histones activates the ATP-dependent chromatin remodeler activity. Its function is as follows. ATP-dependent chromatin remodeler that mediates chromatin-remodeling following DNA damage. Recruited to DNA damage sites through interaction with poly-ADP-ribose: specifically recognizes and binds histones that are poly-ADP-ribosylated on serine residues in response to DNA damage. Poly-ADP-ribose-binding activates the ATP-dependent chromatin remodeler activity, thereby regulating chromatin during DNA repair. Catalyzes nucleosome sliding away from DNA breaks in an ATP-dependent manner. Chromatin remodeling activity promotes PARP2 removal from chromatin. The polypeptide is Chromodomain-helicase-DNA-binding protein 1-like (Chd1l) (Mus musculus (Mouse)).